The chain runs to 127 residues: Major sperm protein 152 (127 aa).

N-acetylthreonine is present on Thr-2. The region spanning 9–126 (DIQTQPGTKI…RRKNLPIEYN (118 aa)) is the MSP domain.

Sperm.

Its subcellular location is the cell projection. The protein localises to the pseudopodium. The protein resides in the cytoplasm. It localises to the cytoskeleton. Functionally, central component in molecular interactions underlying sperm crawling. Forms an extensive filament system that extends from sperm villipoda, along the leading edge of the pseudopod. This Caenorhabditis elegans protein is Major sperm protein 152 (msp-152).